We begin with the raw amino-acid sequence, 161 residues long: 2-C-methyl-D-erythritol 2,4-cyclodiphosphate synthase (161 aa).

A divalent metal cation-binding residues include aspartate 11 and histidine 13. 4-CDP-2-C-methyl-D-erythritol 2-phosphate contacts are provided by residues 11-13 (DIH) and 37-38 (HS). Position 45 (histidine 45) interacts with a divalent metal cation. Residues 59–61 (DIG) and 135–138 (TTNE) each bind 4-CDP-2-C-methyl-D-erythritol 2-phosphate.

It belongs to the IspF family. Homotrimer. A divalent metal cation is required as a cofactor.

The enzyme catalyses 4-CDP-2-C-methyl-D-erythritol 2-phosphate = 2-C-methyl-D-erythritol 2,4-cyclic diphosphate + CMP. Its pathway is isoprenoid biosynthesis; isopentenyl diphosphate biosynthesis via DXP pathway; isopentenyl diphosphate from 1-deoxy-D-xylulose 5-phosphate: step 4/6. Functionally, involved in the biosynthesis of isopentenyl diphosphate (IPP) and dimethylallyl diphosphate (DMAPP), two major building blocks of isoprenoid compounds. Catalyzes the conversion of 4-diphosphocytidyl-2-C-methyl-D-erythritol 2-phosphate (CDP-ME2P) to 2-C-methyl-D-erythritol 2,4-cyclodiphosphate (ME-CPP) with a corresponding release of cytidine 5-monophosphate (CMP). This is 2-C-methyl-D-erythritol 2,4-cyclodiphosphate synthase from Acaryochloris marina (strain MBIC 11017).